A 379-amino-acid polypeptide reads, in one-letter code: Transcription termination factor Rho (379 aa).

Positions 1–68 (MTDKYGFLRS…KRIFQINGRF (68 aa)) constitute a Rho RNA-BD domain. Residues 111–116 (GKGQRG), 123–128 (KTGKTT), and R154 contribute to the ATP site.

Belongs to the Rho family. In terms of assembly, homohexamer. The homohexamer assembles into an open ring structure.

Its function is as follows. Facilitates transcription termination by a mechanism that involves Rho binding to the nascent RNA, activation of Rho's RNA-dependent ATPase activity, and release of the mRNA from the DNA template. The sequence is that of Transcription termination factor Rho from Karelsulcia muelleri (strain SMDSEM) (Sulcia muelleri).